Reading from the N-terminus, the 177-residue chain is Large ribosomal subunit protein uL6 (177 aa).

It belongs to the universal ribosomal protein uL6 family. As to quaternary structure, part of the 50S ribosomal subunit.

This protein binds to the 23S rRNA, and is important in its secondary structure. It is located near the subunit interface in the base of the L7/L12 stalk, and near the tRNA binding site of the peptidyltransferase center. In Rickettsia prowazekii (strain Madrid E), this protein is Large ribosomal subunit protein uL6.